The chain runs to 140 residues: MRHGMSGRKLNRDKSARKALFVSLANALLKHEQIKTTLPKAKDARPIVEKLITLGKRGDLHARRQAYAFLRDDKVVAKLFAVIGPRYKERQGGYCRVLKAGFRYGDCAPMAIIELVDRDLAAKGTDSGPTADKKADADEE.

Belongs to the bacterial ribosomal protein bL17 family. In terms of assembly, part of the 50S ribosomal subunit. Contacts protein L32.

This chain is Large ribosomal subunit protein bL17, found in Paramagnetospirillum magneticum (strain ATCC 700264 / AMB-1) (Magnetospirillum magneticum).